A 58-amino-acid polypeptide reads, in one-letter code: Large ribosomal subunit protein eL37 (58 aa).

Residues C20, C23, C35, and C38 each coordinate Zn(2+). Residues 20–38 (CRRCGEKSYHTKKKVCSSC) form a C4-type zinc finger.

This sequence belongs to the eukaryotic ribosomal protein eL37 family. Zn(2+) serves as cofactor.

In terms of biological role, binds to the 23S rRNA. The protein is Large ribosomal subunit protein eL37 of Haloquadratum walsbyi (strain DSM 16790 / HBSQ001).